A 288-amino-acid polypeptide reads, in one-letter code: Phosphatidylserine decarboxylase proenzyme (288 aa).

Catalysis depends on charge relay system; for autoendoproteolytic cleavage activity residues Asp95, His152, and Ser255. The Schiff-base intermediate with substrate; via pyruvic acid; for decarboxylase activity role is filled by Ser255. A Pyruvic acid (Ser); by autocatalysis modification is found at Ser255.

Belongs to the phosphatidylserine decarboxylase family. PSD-B subfamily. Prokaryotic type I sub-subfamily. Heterodimer of a large membrane-associated beta subunit and a small pyruvoyl-containing alpha subunit. Pyruvate is required as a cofactor. Is synthesized initially as an inactive proenzyme. Formation of the active enzyme involves a self-maturation process in which the active site pyruvoyl group is generated from an internal serine residue via an autocatalytic post-translational modification. Two non-identical subunits are generated from the proenzyme in this reaction, and the pyruvate is formed at the N-terminus of the alpha chain, which is derived from the carboxyl end of the proenzyme. The autoendoproteolytic cleavage occurs by a canonical serine protease mechanism, in which the side chain hydroxyl group of the serine supplies its oxygen atom to form the C-terminus of the beta chain, while the remainder of the serine residue undergoes an oxidative deamination to produce ammonia and the pyruvoyl prosthetic group on the alpha chain. During this reaction, the Ser that is part of the protease active site of the proenzyme becomes the pyruvoyl prosthetic group, which constitutes an essential element of the active site of the mature decarboxylase.

The protein resides in the cell membrane. It carries out the reaction a 1,2-diacyl-sn-glycero-3-phospho-L-serine + H(+) = a 1,2-diacyl-sn-glycero-3-phosphoethanolamine + CO2. The protein operates within phospholipid metabolism; phosphatidylethanolamine biosynthesis; phosphatidylethanolamine from CDP-diacylglycerol: step 2/2. In terms of biological role, catalyzes the formation of phosphatidylethanolamine (PtdEtn) from phosphatidylserine (PtdSer). The polypeptide is Phosphatidylserine decarboxylase proenzyme (Methylococcus capsulatus (strain ATCC 33009 / NCIMB 11132 / Bath)).